The chain runs to 73 residues: DNA-directed RNA polymerase subunit omega (73 aa).

This sequence belongs to the RNA polymerase subunit omega family. As to quaternary structure, in cyanobacteria the RNAP catalytic core is composed of 2 alpha, 1 beta, 1 beta', 1 gamma and 1 omega subunit. When a sigma factor is associated with the core the holoenzyme is formed, which can initiate transcription.

It catalyses the reaction RNA(n) + a ribonucleoside 5'-triphosphate = RNA(n+1) + diphosphate. In terms of biological role, promotes RNA polymerase assembly. Latches the N- and C-terminal regions of the beta' subunit thereby facilitating its interaction with the beta and alpha subunits. In Gloeobacter violaceus (strain ATCC 29082 / PCC 7421), this protein is DNA-directed RNA polymerase subunit omega.